Consider the following 547-residue polypeptide: Chaperonin GroEL (547 aa).

Residues 30–33 (TLGP), Lys-51, 87–91 (DGTTT), Gly-415, and Asp-496 contribute to the ATP site. The tract at residues 527-547 (ENTPDMPAMPPGGMGGMGGMY) is disordered. The span at 538 to 547 (GGMGGMGGMY) shows a compositional bias: gly residues.

The protein belongs to the chaperonin (HSP60) family. Forms a cylinder of 14 subunits composed of two heptameric rings stacked back-to-back. Interacts with the co-chaperonin GroES.

The protein resides in the cytoplasm. It catalyses the reaction ATP + H2O + a folded polypeptide = ADP + phosphate + an unfolded polypeptide.. Functionally, together with its co-chaperonin GroES, plays an essential role in assisting protein folding. The GroEL-GroES system forms a nano-cage that allows encapsulation of the non-native substrate proteins and provides a physical environment optimized to promote and accelerate protein folding. This chain is Chaperonin GroEL, found in Chlorobium phaeovibrioides (strain DSM 265 / 1930) (Prosthecochloris vibrioformis (strain DSM 265)).